Reading from the N-terminus, the 150-residue chain is UPF0756 membrane protein Asuc_1151 (150 aa).

A run of 4 helical transmembrane segments spans residues 1–21 (MSLHFNSIGFLLVVLALLGVL), 52–72 (YGLNIGVIILTIGVLSPIVAG), 82–102 (LLHWKMFLSLVVGMLVAWLAG), and 123–143 (ILGVGLLGGIPVGPLIAAGIL).

It belongs to the UPF0756 family.

The protein localises to the cell membrane. This chain is UPF0756 membrane protein Asuc_1151, found in Actinobacillus succinogenes (strain ATCC 55618 / DSM 22257 / CCUG 43843 / 130Z).